Consider the following 296-residue polypeptide: Glycine--tRNA ligase alpha subunit (296 aa).

This sequence belongs to the class-II aminoacyl-tRNA synthetase family. In terms of assembly, tetramer of two alpha and two beta subunits.

Its subcellular location is the cytoplasm. It catalyses the reaction tRNA(Gly) + glycine + ATP = glycyl-tRNA(Gly) + AMP + diphosphate. This Parasynechococcus marenigrum (strain WH8102) protein is Glycine--tRNA ligase alpha subunit.